We begin with the raw amino-acid sequence, 143 residues long: Hemoglobin subunit alpha-1 (143 aa).

S2 carries the post-translational modification N-acetylserine. A Globin domain is found at 2 to 143; it reads SLSSKDKATV…RALALAEKYR (142 aa). H60 contacts O2. H89 contributes to the heme b binding site.

The protein belongs to the globin family. Hb 1 is a heterotetramer of two alpha-1 and two beta-1 chains. Hb 3 is a heterotetramer of two alpha-1 and two beta-2 chains. In terms of tissue distribution, red blood cells.

Its function is as follows. Involved in oxygen transport from gills to the various peripheral tissues. In Gadus morhua (Atlantic cod), this protein is Hemoglobin subunit alpha-1 (hba1).